An 888-amino-acid chain; its full sequence is Alanine--tRNA ligase (888 aa).

His564, His568, Cys676, and His680 together coordinate Zn(2+).

The protein belongs to the class-II aminoacyl-tRNA synthetase family. Zn(2+) is required as a cofactor.

The protein resides in the cytoplasm. It carries out the reaction tRNA(Ala) + L-alanine + ATP = L-alanyl-tRNA(Ala) + AMP + diphosphate. Catalyzes the attachment of alanine to tRNA(Ala) in a two-step reaction: alanine is first activated by ATP to form Ala-AMP and then transferred to the acceptor end of tRNA(Ala). Also edits incorrectly charged Ser-tRNA(Ala) and Gly-tRNA(Ala) via its editing domain. This chain is Alanine--tRNA ligase, found in Bartonella quintana (strain Toulouse) (Rochalimaea quintana).